The following is a 172-amino-acid chain: Transmembrane protein 91 (172 aa).

Topologically, residues 1 to 97 are extracellular; it reads MDNSSIQELQ…SPLLPHDHLG (97 aa). Residues 60–86 are disordered; the sequence is GLGEPETPDFEDTLSSDSDSDDDGGDR. A compositionally biased stretch (acidic residues) spans 65–83; it reads ETPDFEDTLSSDSDSDDDG. A helical membrane pass occupies residues 98 to 118; the sequence is LAVFSVLCCFWPVGIAAFCLA. The Cytoplasmic portion of the chain corresponds to 119–139; the sequence is HKTNKAWAKGDVQGAGAASRR. A helical membrane pass occupies residues 140–160; the sequence is AFLLGVLAVGLGLCTYAAALV. Residues 161 to 172 are Extracellular-facing; the sequence is TLAAYLASRDPP.

Belongs to the CD225/Dispanin family.

It localises to the membrane. This is Transmembrane protein 91 (Tmem91) from Mus musculus (Mouse).